The primary structure comprises 280 residues: MSINLQNVSYTYQAGTPFEGRALFNINLDILDGSYTAFIGHTGSGKSTIMQLLNGLHVPTTGIVSVDKQDITNHSKNKEIKSIRKHVGLVFQFPESQLFEETVLKDVAFGPQNFGVSPEEAEALAREKLALVGISENLFEKNPFELSGGQMRRVAIAGILAMQPKVLVLDEPTAGLDPKGRKELMTIFKKLHQSGMTIVLVTHLMDDVANYADFVYVLDKGKIILSGKPKTIFQQVSLLEKKQLGVPKVTKLAQRLVDRGIPISSLPITLEELREVLKHG.

Positions 3–245 (INLQNVSYTY…VSLLEKKQLG (243 aa)) constitute an ABC transporter domain. 40-47 (GHTGSGKS) serves as a coordination point for ATP.

Belongs to the ABC transporter superfamily. Energy-coupling factor EcfA family. Forms a stable energy-coupling factor (ECF) transporter complex composed of 2 membrane-embedded substrate-binding proteins (S component), 2 ATP-binding proteins (A component) and 2 transmembrane proteins (T component).

It is found in the cell membrane. Functionally, ATP-binding (A) component of a common energy-coupling factor (ECF) ABC-transporter complex. Unlike classic ABC transporters this ECF transporter provides the energy necessary to transport a number of different substrates. This is Energy-coupling factor transporter ATP-binding protein EcfA2 from Streptococcus pyogenes serotype M1.